A 210-amino-acid polypeptide reads, in one-letter code: 7-methyl-GTP pyrophosphatase (210 aa).

Catalysis depends on Asp-79, which acts as the Proton acceptor.

The protein belongs to the Maf family. YceF subfamily. A divalent metal cation serves as cofactor.

The protein localises to the cytoplasm. The enzyme catalyses N(7)-methyl-GTP + H2O = N(7)-methyl-GMP + diphosphate + H(+). In terms of biological role, nucleoside triphosphate pyrophosphatase that hydrolyzes 7-methyl-GTP (m(7)GTP). May have a dual role in cell division arrest and in preventing the incorporation of modified nucleotides into cellular nucleic acids. The protein is 7-methyl-GTP pyrophosphatase of Burkholderia lata (strain ATCC 17760 / DSM 23089 / LMG 22485 / NCIMB 9086 / R18194 / 383).